Consider the following 410-residue polypeptide: Arginine deiminase (410 aa).

Cys-399 acts as the Amidino-cysteine intermediate in catalysis.

It belongs to the arginine deiminase family.

It is found in the cytoplasm. The catalysed reaction is L-arginine + H2O = L-citrulline + NH4(+). It participates in amino-acid degradation; L-arginine degradation via ADI pathway; carbamoyl phosphate from L-arginine: step 1/2. The chain is Arginine deiminase from Treponema denticola (strain ATCC 35405 / DSM 14222 / CIP 103919 / JCM 8153 / KCTC 15104).